The following is a 104-amino-acid chain: Histone H4 (104 aa).

The disordered stretch occupies residues 1–21 (MAGRGKVGKGYGKVGAKRHTK).

It belongs to the histone H4 family. In terms of assembly, the nucleosome is a histone octamer containing two molecules each of H2A, H2B, H3 and H4 assembled in one H3-H4 heterotetramer and two H2A-H2B heterodimers. The octamer wraps approximately 147 bp of DNA.

The protein resides in the nucleus. The protein localises to the chromosome. In terms of biological role, core component of nucleosome. Nucleosomes wrap and compact DNA into chromatin, limiting DNA accessibility to the cellular machineries which require DNA as a template. Histones thereby play a central role in transcription regulation, DNA repair, DNA replication and chromosomal stability. DNA accessibility is regulated via a complex set of post-translational modifications of histones, also called histone code, and nucleosome remodeling. The polypeptide is Histone H4 (Sterkiella nova (Ciliate)).